We begin with the raw amino-acid sequence, 131 residues long: Sec-independent protein translocase protein TatB (131 aa).

A helical membrane pass occupies residues 2–22 (LGSLSWEHMLVLVVVGLVVLG). Residues 96-131 (AFDRPVNGAAAQPPPAPAPPPEPHRPGQTPFDADAT) form a disordered region. The span at 107–116 (QPPPAPAPPP) shows a compositional bias: pro residues.

The protein belongs to the TatB family. The Tat system comprises two distinct complexes: a TatABC complex, containing multiple copies of TatA, TatB and TatC subunits, and a separate TatA complex, containing only TatA subunits. Substrates initially bind to the TatABC complex, which probably triggers association of the separate TatA complex to form the active translocon.

It is found in the cell membrane. Its function is as follows. Part of the twin-arginine translocation (Tat) system that transports large folded proteins containing a characteristic twin-arginine motif in their signal peptide across membranes. Together with TatC, TatB is part of a receptor directly interacting with Tat signal peptides. TatB may form an oligomeric binding site that transiently accommodates folded Tat precursor proteins before their translocation. In Mycobacterium avium (strain 104), this protein is Sec-independent protein translocase protein TatB.